The following is a 227-amino-acid chain: MSVMRTGIIAKKLGMTRLFREDGTHVPVTVLHMDDVRVVAARTKERDGYAAVQLGFGHAKTKNVTKPMKGHFAAAKVEPANRLVEFRVADDAVLEAGQVLSAAHFTVGQKVDVAGISKGKGFAGGMKRWNFRGLEASHGVSISHRSLGSTGNRQDPGKTFKNKKMAGHLGGERITTLNLEVAAIDEARNLIMIKGAVPGAKDGYVLVRDAVKTARPADAAYPAALKA.

Residue Gln-154 is modified to N5-methylglutamine.

This sequence belongs to the universal ribosomal protein uL3 family. Part of the 50S ribosomal subunit. Forms a cluster with proteins L14 and L19. Post-translationally, methylated by PrmB.

One of the primary rRNA binding proteins, it binds directly near the 3'-end of the 23S rRNA, where it nucleates assembly of the 50S subunit. This is Large ribosomal subunit protein uL3 from Acidiphilium cryptum (strain JF-5).